A 360-amino-acid chain; its full sequence is Protein RecA (360 aa).

66 to 73 contributes to the ATP binding site; that stretch reads GPESSGKT. A disordered region spans residues 330–360; the sequence is DAKAIEERENPEKVKQDKEVPVNKDASDEKK.

It belongs to the RecA family.

It localises to the cytoplasm. Functionally, can catalyze the hydrolysis of ATP in the presence of single-stranded DNA, the ATP-dependent uptake of single-stranded DNA by duplex DNA, and the ATP-dependent hybridization of homologous single-stranded DNAs. It interacts with LexA causing its activation and leading to its autocatalytic cleavage. This Lactobacillus johnsonii (strain CNCM I-12250 / La1 / NCC 533) protein is Protein RecA.